We begin with the raw amino-acid sequence, 341 residues long: Aspartate carbamoyltransferase catalytic subunit (341 aa).

Positions 89 and 90 each coordinate carbamoyl phosphate. Residue K117 participates in L-aspartate binding. Carbamoyl phosphate contacts are provided by R139, H169, and Q172. Residues R202 and R257 each contribute to the L-aspartate site. Carbamoyl phosphate contacts are provided by G298 and P299.

Belongs to the aspartate/ornithine carbamoyltransferase superfamily. ATCase family. In terms of assembly, heterododecamer (2C3:3R2) of six catalytic PyrB chains organized as two trimers (C3), and six regulatory PyrI chains organized as three dimers (R2).

It catalyses the reaction carbamoyl phosphate + L-aspartate = N-carbamoyl-L-aspartate + phosphate + H(+). Its pathway is pyrimidine metabolism; UMP biosynthesis via de novo pathway; (S)-dihydroorotate from bicarbonate: step 2/3. Functionally, catalyzes the condensation of carbamoyl phosphate and aspartate to form carbamoyl aspartate and inorganic phosphate, the committed step in the de novo pyrimidine nucleotide biosynthesis pathway. The sequence is that of Aspartate carbamoyltransferase catalytic subunit from Paraburkholderia phytofirmans (strain DSM 17436 / LMG 22146 / PsJN) (Burkholderia phytofirmans).